Here is a 606-residue protein sequence, read N- to C-terminus: Serine/threonine-protein kinase A-Raf (606 aa).

One can recognise an RBD domain in the interval 19-91 (GTVKVYLPNK…DGEELIVEVL (73 aa)). The Phorbol-ester/DAG-type zinc finger occupies 98–144 (MHNFVRKTFFSLAFCDFCLKFLFHGFRCQTCGYKFHQHCSSKVPTVC). Positions 99, 112, 115, 125, 128, 133, 136, and 144 each coordinate Zn(2+). S157 and S162 each carry phosphoserine. Residues 160 to 207 (DLSGGSRQHEAPSNRPLNELLTPQGPSPRTQHCDPEHFPFPAPANAPL) form a disordered region. T181 is subject to Phosphothreonine. Phosphoserine occurs at positions 186 and 214. The disordered stretch occupies residues 240–290 (STDAAGSRGGSDGTPRGSPSPASVSSGRKSPHSKSPAEQRERKSLADDKKK). T253 is modified (phosphothreonine). S257 and S269 each carry phosphoserine. The segment covering 274–289 (SPAEQRERKSLADDKK) has biased composition (basic and acidic residues). The 261-residue stretch at 310–570 (VQLLKRIGTG…PQILATIELL (261 aa)) folds into the Protein kinase domain. Residues 316 to 324 (IGTGSFGTV) and K336 each bind ATP. T318 carries the post-translational modification Phosphothreonine. Catalysis depends on D429, which acts as the Proton acceptor.

It belongs to the protein kinase superfamily. TKL Ser/Thr protein kinase family. RAF subfamily. In terms of assembly, interacts with TH1L/NELFD. The cofactor is Zn(2+). In terms of processing, dephosphorylation of Ser-214 by the SHOC2-MRAS-PP1c (SMP) complex consisting of SHOC2, GTP-bound M-Ras/MRAS and the catalytic subunit of protein phosphatase 1 (PPP1CA, PPP1CB or PPP1CC); this relieves inactivation and stimulates kinase activity. In terms of tissue distribution, predominantly in urogenital tissues.

It carries out the reaction L-seryl-[protein] + ATP = O-phospho-L-seryl-[protein] + ADP + H(+). The enzyme catalyses L-threonyl-[protein] + ATP = O-phospho-L-threonyl-[protein] + ADP + H(+). Its function is as follows. Involved in the transduction of mitogenic signals from the cell membrane to the nucleus. May also regulate the TOR signaling cascade. Phosphorylates PFKFB2. Serves as a positive regulator of myogenic differentiation by inducing cell cycle arrest, the expression of myogenin and other muscle-specific proteins, and myotube formation. The chain is Serine/threonine-protein kinase A-Raf (ARAF) from Homo sapiens (Human).